The primary structure comprises 268 residues: Helix-loop-helix protein 6 (268 aa).

Residues Q117–P130 show a composition bias toward low complexity. The disordered stretch occupies residues Q117 to T140. A compositionally biased stretch (polar residues) spans K131–T140. Residues S173–L225 form the bHLH domain.

In terms of tissue distribution, expressed in the gland cells of the pharynx and weakly in the pharyngeal neuron.

The protein resides in the nucleus. Functionally, transcription factor that regulates the development of the g2 pharyngeal gland cells and pharyngeal gland function and thereby is required for feeding. Required for the expression of a number of genes in the pharyngeal gland, possibly by binding to the E box motif (5'-CANNTG-3') in the promoter region of these genes. Positively regulates the expression of genes encoding mucin-like proteins, which lubricate the pharyngeal tract to ensure efficient passage of the bacterial food source. Exhibits pharyngeal gland-specific positive autoregulation activity. The protein is Helix-loop-helix protein 6 (hlh-6) of Caenorhabditis elegans.